The sequence spans 21 residues: Outer membrane protein P2 (21 aa).

In terms of assembly, disulfide bond interactions within and between MOMP molecules and other components form high molecular-weight oligomers.

The protein resides in the cell outer membrane. In terms of biological role, structural rigidity of the outer membrane of elementary bodies and porin forming, permitting diffusion of solutes through the intracellular reticulate body membrane. Binds carcinoembryonic antigen (CEA). The chain is Outer membrane protein P2 from Glaesserella parasuis (Haemophilus parasuis).